The primary structure comprises 517 residues: Maturase K (517 aa).

It belongs to the intron maturase 2 family. MatK subfamily.

The protein localises to the plastid. It is found in the chloroplast. Functionally, usually encoded in the trnK tRNA gene intron. Probably assists in splicing its own and other chloroplast group II introns. This chain is Maturase K, found in Phalaenopsis japonica (Orchid).